The following is a 630-amino-acid chain: Pentatricopeptide repeat-containing protein At1g63130, mitochondrial (630 aa).

A mitochondrion-targeting transit peptide spans 1-22 (MRRLFAISSTGNRFVHRSLLGK). PPR repeat units follow at residues 80–114 (SIVE…GISH), 115–149 (NLYT…GYEP), 150–184 (DIVT…GYQP), 185–219 (DSFT…GCQP), 220–254 (DLVT…KIEP), 255–289 (GVVI…GIRP), 290–324 (NVVT…KINP), 325–359 (NVVT…SIDP), 360–394 (DIFT…DCFP), 395–429 (NVVT…GLVG), 430–464 (NTVT…GVLP), 465–499 (DIMT…KMEP), 500–534 (DIYT…GVKP), 535–569 (NVVT…GPLP), and 570–604 (DSGT…RFVG).

It belongs to the PPR family. P subfamily.

The protein localises to the mitochondrion. The sequence is that of Pentatricopeptide repeat-containing protein At1g63130, mitochondrial from Arabidopsis thaliana (Mouse-ear cress).